A 449-amino-acid chain; its full sequence is Adenylosuccinate synthetase isozyme 1 A (449 aa).

Residues Met1 to Pro10 show a composition bias toward polar residues. A disordered region spans residues Met1–Gly22. GTP is bound by residues Gly34–Lys40 and Gly62–Thr64. The active-site Proton acceptor is Asp35. Asp35 and Gly62 together coordinate Mg(2+). A substrate-binding site is contributed by Asp35. IMP is bound by residues Asp35–Lys38, Asn60–His63, Thr155, Arg169, Asn248, Thr263, and Arg327. His63 functions as the Proton donor in the catalytic mechanism. Residue Val323–Arg329 participates in substrate binding. GTP is bound by residues Arg329, Lys355–Asp357, and Gly437–Lys440.

The protein belongs to the adenylosuccinate synthetase family. Homodimer. It depends on Mg(2+) as a cofactor.

Its subcellular location is the cytoplasm. It catalyses the reaction IMP + L-aspartate + GTP = N(6)-(1,2-dicarboxyethyl)-AMP + GDP + phosphate + 2 H(+). Its pathway is purine metabolism; AMP biosynthesis via de novo pathway; AMP from IMP: step 1/2. In terms of biological role, component of the purine nucleotide cycle (PNC), which interconverts IMP and AMP to regulate the nucleotide levels in various tissues, and which contributes to glycolysis and ammoniagenesis. Catalyzes the first committed step in the biosynthesis of AMP from IMP. This Salmo salar (Atlantic salmon) protein is Adenylosuccinate synthetase isozyme 1 A (adss1a).